The sequence spans 617 residues: V-type proton ATPase catalytic subunit A (617 aa).

D2 carries the post-translational modification N-acetylalanine. Residue T136 is modified to Phosphothreonine. 250–257 provides a ligand contact to ATP; sequence GAFGCGKT. Residue S384 is modified to Phosphoserine; by AMPK.

It belongs to the ATPase alpha/beta chains family. As to quaternary structure, V-ATPase is a heteromultimeric enzyme made up of two complexes: the ATP-hydrolytic V1 complex and the proton translocation V0 complex. The V1 complex consists of three catalytic AB heterodimers that form a heterohexamer, three peripheral stalks each consisting of EG heterodimers, one central rotor including subunits D and F, and the regulatory subunits C and H. The proton translocation complex V0 consists of the proton transport subunit a, a ring of proteolipid subunits c9c'', rotary subunit d, subunits e and f, and the accessory subunits ATP6AP1/Ac45 and ATP6AP2/PRR. Interacts with the V0 complex V-ATPase subunit a4 ATP6V0A4. Interacts with WFS1. Interacts with alpha-crystallin B chain/CRYAB and with MTOR, forming a ternary complex. (Microbial infection) Interacts with Rabies virus protein M; this interaction promotes virion uncoating. Phosphorylation at Ser-384 by AMPK down-regulates its enzyme activity. As to expression, high expression in the skin.

The protein resides in the cytoplasm. It is found in the cytosol. Its subcellular location is the cytoplasmic vesicle. It localises to the secretory vesicle. The protein localises to the clathrin-coated vesicle membrane. The protein resides in the lysosome. It catalyses the reaction ATP + H2O + 4 H(+)(in) = ADP + phosphate + 5 H(+)(out). Its activity is regulated as follows. ATP hydrolysis occurs at the interface between the nucleotide-binding domains of subunits A and B. ATP hydrolysis triggers a conformational change in the subunits D and F, which induces a shift of subunit d. The c-ring is subsequently rotated and results in a continuous proton translocation across the membrane. Its function is as follows. Catalytic subunit of the V1 complex of vacuolar(H+)-ATPase (V-ATPase), a multisubunit enzyme composed of a peripheral complex (V1) that hydrolyzes ATP and a membrane integral complex (V0) that translocates protons. V-ATPase is responsible for acidifying and maintaining the pH of intracellular compartments and in some cell types, is targeted to the plasma membrane, where it is responsible for acidifying the extracellular environment. In aerobic conditions, involved in intracellular iron homeostasis, thus triggering the activity of Fe(2+) prolyl hydroxylase (PHD) enzymes, and leading to HIF1A hydroxylation and subsequent proteasomal degradation. May play a role in neurite development and synaptic connectivity. (Microbial infection) Plays an important role in virion uncoating during Rabies virus replication after membrane fusion. Specifically, participates in the dissociation of incoming viral matrix M proteins uncoating through direct interaction. The protein is V-type proton ATPase catalytic subunit A (ATP6V1A) of Homo sapiens (Human).